The following is a 298-amino-acid chain: Ankyrin repeat domain-containing protein 29 (298 aa).

ANK repeat units follow at residues 8–38 (PLAN…DVDC), 42–71 (YGTT…DINL), 75–104 (TGST…STEF), 108–137 (DGGT…NVHD), 141–170 (DGAT…KVNQ), 174–203 (DGTA…DRDA), 207–236 (DGST…SLGI), and 239–268 (NGST…DPAL).

The chain is Ankyrin repeat domain-containing protein 29 (ankrd29) from Danio rerio (Zebrafish).